Reading from the N-terminus, the 154-residue chain is Myoglobin (154 aa).

Residues 2–148 (GLSDEEWKKV…FRNDMASRYK (147 aa)) form the Globin domain. Residue H65 participates in nitrite binding. Residue H65 coordinates O2. H94 lines the heme b pocket.

The protein belongs to the globin family. As to quaternary structure, monomeric.

Its subcellular location is the cytoplasm. It localises to the sarcoplasm. It carries out the reaction Fe(III)-heme b-[protein] + nitric oxide + H2O = Fe(II)-heme b-[protein] + nitrite + 2 H(+). The enzyme catalyses H2O2 + AH2 = A + 2 H2O. Its function is as follows. Monomeric heme protein which primary function is to store oxygen and facilitate its diffusion within muscle tissues. Reversibly binds oxygen through a pentacoordinated heme iron and enables its timely and efficient release as needed during periods of heightened demand. Depending on the oxidative conditions of tissues and cells, and in addition to its ability to bind oxygen, it also has a nitrite reductase activity whereby it regulates the production of bioactive nitric oxide. Under stress conditions, like hypoxia and anoxia, it also protects cells against reactive oxygen species thanks to its pseudoperoxidase activity. The protein is Myoglobin (MB) of Varanus varius (Lace monitor lizard).